A 257-amino-acid polypeptide reads, in one-letter code: LexA repressor (257 aa).

Positions 64–84 (FREIGEAAGLKSPSSVKHQLQ) form a DNA-binding region, H-T-H motif. Residues serine 181 and lysine 218 each act as for autocatalytic cleavage activity in the active site.

This sequence belongs to the peptidase S24 family. In terms of assembly, homodimer.

It carries out the reaction Hydrolysis of Ala-|-Gly bond in repressor LexA.. Its function is as follows. Represses a number of genes involved in the response to DNA damage (SOS response), including recA and lexA. In the presence of single-stranded DNA, RecA interacts with LexA causing an autocatalytic cleavage which disrupts the DNA-binding part of LexA, leading to derepression of the SOS regulon and eventually DNA repair. This Bifidobacterium adolescentis (strain ATCC 15703 / DSM 20083 / NCTC 11814 / E194a) protein is LexA repressor.